We begin with the raw amino-acid sequence, 186 residues long: MDSFSTKNLALQAQKKLMSKMATKTVANLFIDDTSSEVLDELYRVTKEYTRNRKEAQKIIKNLIKMVVKLGVLYRNGQFNNEELALVERFRKKVHTLAMTAVSFYQIDFTFDRRVMSNLLNDCRELLHQAINRHLTAKSHARINHVFNHFADCDFLATLYGPSEVYRGHLQKICEGVNKMLDEGNL.

Residues 37 to 70 are a coiled coil; sequence EVLDELYRVTKEYTRNRKEAQKIIKNLIKMVVKL.

This sequence belongs to the TNFAIP8 family.

It localises to the cytoplasm. The sequence is that of Tumor necrosis factor alpha-induced protein 8-like protein 1 (tnfaip8l1) from Danio rerio (Zebrafish).